The primary structure comprises 519 residues: 2-isopropylmalate synthase (519 aa).

The region spanning 12-274 is the Pyruvate carboxyltransferase domain; it reads VVIFDTTLRD…WCNVESTMLT (263 aa). The Mn(2+) site is built by Asp21, His209, His211, and Asn245. The regulatory domain stretch occupies residues 398-519; the sequence is KLSSLTVIAG…QRDVPAAAAS (122 aa).

The protein belongs to the alpha-IPM synthase/homocitrate synthase family. LeuA type 1 subfamily. Homodimer. It depends on Mn(2+) as a cofactor.

It localises to the cytoplasm. It catalyses the reaction 3-methyl-2-oxobutanoate + acetyl-CoA + H2O = (2S)-2-isopropylmalate + CoA + H(+). The protein operates within amino-acid biosynthesis; L-leucine biosynthesis; L-leucine from 3-methyl-2-oxobutanoate: step 1/4. Its function is as follows. Catalyzes the condensation of the acetyl group of acetyl-CoA with 3-methyl-2-oxobutanoate (2-ketoisovalerate) to form 3-carboxy-3-hydroxy-4-methylpentanoate (2-isopropylmalate). The sequence is that of 2-isopropylmalate synthase from Nitrobacter winogradskyi (strain ATCC 25391 / DSM 10237 / CIP 104748 / NCIMB 11846 / Nb-255).